A 103-amino-acid polypeptide reads, in one-letter code: UPF0134 protein MPN_484 (103 aa).

This sequence belongs to the UPF0134 family.

In Mycoplasma pneumoniae (strain ATCC 29342 / M129 / Subtype 1) (Mycoplasmoides pneumoniae), this protein is UPF0134 protein MPN_484.